A 492-amino-acid polypeptide reads, in one-letter code: MTEHFDVVIVGAGISGISTAWHLQDRCPTKSYVILERRANIGGTWDLFKYPGIRSDSDMFTLGFRFKPWTSAKSIADGPSIWNYINEAAQENGIDKHIRTNHRVLGADWSDAENRWTITVEADGEQKQITASFLSVCSGYYNYDQGYSPEFPGADDFAGQIIHPQHWPEDLDYAGKKIVVIGSGATAVTLIPSLVNGGAAHVTMLQRSPTYIGSLPLVDPVAEKTNKYLPKNLAHFVNRWKAIAFSTAQYQLARKFPNYMRKTLMTMAQRRLPEGFDVQKHFGPRYNPWDERLCLAPNGDLFKTIRAGKADVVTDTIAKFTETGIKLTSGEELTADIIITATGLNMQLFGGASLTRNGQEVDLTETMTYKGLMLSGVPNMAITFGYTNASWTLKADLVSEFICRVLNYMDDNGFDRVEPQHPGDAVDALPFMDFNPGYFRRAMDSLPKSGSRAPWRLKQNYFFDLRMIRYDKVDEESLHFTKHRAAVSASSS.

FAD contacts are provided by residues serine 15, glutamate 36, 44–47 (TWDL), aspartate 56, and valine 104. 54–56 (RSD) is a binding site for NADP(+). Residues 183–189 (SGATAVT) and 207–208 (RS) contribute to the NADP(+) site.

It belongs to the FAD-binding monooxygenase family. Requires FAD as cofactor.

Its subcellular location is the cell membrane. It catalyses the reaction ethionamide + NADPH + O2 + H(+) = ethionamide S-oxide + NADP(+) + H2O. Its function is as follows. Monooxygenase able to convert a wide range of ketones to the corresponding esters or lactones via a Baeyer-Villiger oxidation reaction. Can act on long-chain aliphatic ketones (2-hexanone to 2-dodecanone) and on aromatic ketones (phenylacetone and benzylacetone). Is also able to catalyze enantioselective sulfoxidation of methyl-p-tolylsulfide. In vivo, likely functions as a BVMO, but the exact nature of the physiological substrate(s) remains to be established. Is responsible for the activation of several thiocarbamide-containing pro-drugs, such as ethionamide (ETH), isoxyl (ISO) and thiacetazone (TAC), into reactive species. This is FAD-containing monooxygenase EthA (ethA) from Mycolicibacterium smegmatis (strain ATCC 700084 / mc(2)155) (Mycobacterium smegmatis).